The chain runs to 259 residues: MNSKIEIIKIKAKKPINPTKIPGAKYVINQYIGCQYACKYCYARFMCKWYNYGKWGSWVVVKENLPDLIKNKHIKGKIYMSSVSDAYRPIEKDFKLTRNILKNIDKRAELSILTKSDLVLRDMDLFKKFSSIEVGLTINNFEGNLKKDIEPFSPSNEKRIDALKTLYENGIKNYAFISPIIPDLIDVEYIIGETKPFTNFYYFEFLNLKASREFKHYLEQNYPESYEIISNKTAFKRYIDEVINTIKKKDIAIKGICVH.

The Radical SAM core domain occupies 19–249 (TKIPGAKYVI…DEVINTIKKK (231 aa)). [4Fe-4S] cluster-binding residues include C34, C38, and C41.

The cofactor is [4Fe-4S] cluster.

This is an uncharacterized protein from Methanocaldococcus jannaschii (strain ATCC 43067 / DSM 2661 / JAL-1 / JCM 10045 / NBRC 100440) (Methanococcus jannaschii).